The chain runs to 764 residues: 5-methyltetrahydropteroyltriglutamate--homocysteine methyltransferase (764 aa).

5-methyltetrahydropteroyltri-L-glutamate is bound by residues 16–19 (RELK) and Lys-121. Residues 440–442 (IGS) and Glu-493 contribute to the L-homocysteine site. L-methionine contacts are provided by residues 440 to 442 (IGS) and Glu-493. 5-methyltetrahydropteroyltri-L-glutamate-binding positions include 524 to 525 (RC) and Trp-570. Position 608 (Asp-608) interacts with L-homocysteine. Asp-608 serves as a coordination point for L-methionine. Glu-614 lines the 5-methyltetrahydropteroyltri-L-glutamate pocket. Residues His-650, Cys-652, and Glu-674 each coordinate Zn(2+). Residue His-703 is the Proton donor of the active site. Zn(2+) is bound at residue Cys-735.

This sequence belongs to the vitamin-B12 independent methionine synthase family. It depends on Zn(2+) as a cofactor.

It carries out the reaction 5-methyltetrahydropteroyltri-L-glutamate + L-homocysteine = tetrahydropteroyltri-L-glutamate + L-methionine. It functions in the pathway amino-acid biosynthesis; L-methionine biosynthesis via de novo pathway; L-methionine from L-homocysteine (MetE route): step 1/1. In terms of biological role, catalyzes the transfer of a methyl group from 5-methyltetrahydrofolate to homocysteine resulting in methionine formation. This is 5-methyltetrahydropteroyltriglutamate--homocysteine methyltransferase from Burkholderia cenocepacia (strain ATCC BAA-245 / DSM 16553 / LMG 16656 / NCTC 13227 / J2315 / CF5610) (Burkholderia cepacia (strain J2315)).